A 96-amino-acid chain; its full sequence is Co-chaperonin GroES (96 aa).

It belongs to the GroES chaperonin family. As to quaternary structure, heptamer of 7 subunits arranged in a ring. Interacts with the chaperonin GroEL.

It is found in the cytoplasm. Its function is as follows. Together with the chaperonin GroEL, plays an essential role in assisting protein folding. The GroEL-GroES system forms a nano-cage that allows encapsulation of the non-native substrate proteins and provides a physical environment optimized to promote and accelerate protein folding. GroES binds to the apical surface of the GroEL ring, thereby capping the opening of the GroEL channel. In Acinetobacter baylyi (strain ATCC 33305 / BD413 / ADP1), this protein is Co-chaperonin GroES.